The following is a 310-amino-acid chain: Cytosolic Fe-S cluster assembly factor Nubp1 homolog (310 aa).

[4Fe-4S] cluster-binding residues include cysteine 8, cysteine 22, cysteine 25, and cysteine 31. An ATP-binding site is contributed by 62-69; sequence GKGGVGKS. The [4Fe-4S] cluster site is built by cysteine 239 and cysteine 242.

It belongs to the Mrp/NBP35 ATP-binding proteins family. NUBP1/NBP35 subfamily. In terms of assembly, heterotetramer of 2 Nubp1 and 2 Nubp2 chains. It depends on [4Fe-4S] cluster as a cofactor.

The protein localises to the cytoplasm. Component of the cytosolic iron-sulfur (Fe/S) protein assembly (CIA) machinery. Required for maturation of extramitochondrial Fe-S proteins. The Nubp1-Nubp2 heterotetramer forms a Fe-S scaffold complex, mediating the de novo assembly of an Fe-S cluster and its transfer to target apoproteins. This Drosophila willistoni (Fruit fly) protein is Cytosolic Fe-S cluster assembly factor Nubp1 homolog.